Here is a 390-residue protein sequence, read N- to C-terminus: uncharacterized protein (390 aa).

The next 11 membrane-spanning stretches (helical) occupy residues 10-30 (LSFC…LPIL), 43-63 (FLIG…QIPF), 81-101 (FMFF…GLII), 134-154 (AIGV…PIIV), 162-182 (IFWI…FFVP), 213-233 (FYLG…MIPN), 246-266 (WKVY…FIFY), 272-292 (ILEN…IIFL), 298-318 (LLFL…LEVF), 341-361 (TSQF…YSFL), and 363-383 (FSQI…FSFF).

It belongs to the major facilitator superfamily.

Its subcellular location is the cell membrane. This is an uncharacterized protein from Buchnera aphidicola subsp. Acyrthosiphon pisum (strain APS) (Acyrthosiphon pisum symbiotic bacterium).